Reading from the N-terminus, the 220-residue chain is MSDENLLTTLDTYLASGIHIGTQQKTEDMRRFIYRVRADGLYVLDVRKTDERLRLAAKFLSNYEPEDIMAVTRRVYSVGPLKEFGKVTGINTVAGRFVPGTLTNPSAKKFAEPEVLFLSDPRVDKQALKEAIEIGIPVIGMCDTEHLTSHIDFIIPTNNKGRKSVSLMYYLIAREYMKNRGLIGEEVPFSYDQFLEKAMNVKVKMNPSNRQRGRFQRRRR.

It belongs to the universal ribosomal protein uS2 family.

The protein is Small ribosomal subunit protein uS2 of Methanococcus maripaludis (strain C5 / ATCC BAA-1333).